The sequence spans 113 residues: MSLLPSRAARVPGPSSSLCALLALLLLTPPGPLVSAGPVAAAVRELRCMCLTVTPGIHPKMISSLQVFAVGPQCSKVEVVPTLKNKKEVCLDPEAPLIKKFIQKTLDSGNKKN.

An N-terminal signal peptide occupies residues 1-36; that stretch reads MSLLPSRAARVPGPSSSLCALLALLLLTPPGPLVSA. Disulfide bonds link cysteine 48–cysteine 74 and cysteine 50–cysteine 90.

This sequence belongs to the intercrine alpha (chemokine CxC) family.

It is found in the secreted. Chemotactic for neutrophil granulocytes. Signals through binding and activation of its receptors (CXCR1 and CXCR2). In addition to its chemotactic and angiogenic properties, it has strong antibacterial activity against Gram-positive and Gram-negative bacteria (90-fold-higher when compared to CXCL5 and CXCL7). The protein is C-X-C motif chemokine 6 (CXCL6) of Equus caballus (Horse).